Consider the following 154-residue polypeptide: Transcriptional repressor NrdR (154 aa).

Residues 3-34 (CPFCGANDTKVIDSRLVAEGEQVRRRRECVAC) fold into a zinc finger. Residues 49–139 (PRLIKQDGTR…VYRRFQDLDE (91 aa)) form the ATP-cone domain.

Belongs to the NrdR family. Requires Zn(2+) as cofactor.

Functionally, negatively regulates transcription of bacterial ribonucleotide reductase nrd genes and operons by binding to NrdR-boxes. This chain is Transcriptional repressor NrdR, found in Pseudomonas entomophila (strain L48).